A 53-amino-acid polypeptide reads, in one-letter code: Temporin-SHd (53 aa).

Residues 1–10 (FLGTINLSLC) form the signal peptide. A propeptide spanning residues 11 to 34 (EQERDADEEKRDEPDESDVEVEKR) is cleaved from the precursor. Phe-51 bears the Phenylalanine amide mark.

It is found in the secreted. The protein localises to the target cell membrane. In terms of biological role, non-amphipathic mildly cationic alpha-helical antimicrobial peptide with potent activity against Gram-positive (including methicillin-resistant Staphylococcus aureus (MRSA)) and Gram-negative bacteria, and some fungi, as well as against Trypanosoma and Leishmania (both promastigote and amastigote forms). Strongly and selectively perturbs anionic bilayer membranes by interacting with the polar head groups and acyl region of the phospholipids, with formation of regions of two coexisting phases, one phase rich in peptide and the other lipid-rich. Shows low hemolytic activity (LC(50)=44 uM) and a low toxicity for human monocytes THP-1 and THP-1-derived macrophages. Is not toxic to human hepatoma-derived cells. The chain is Temporin-SHd from Pelophylax saharicus (Sahara frog).